Reading from the N-terminus, the 124-residue chain is MTTILAIAVFGAVGCVARYLLAGGVYALAGRAFPWGTLAVNVIGAFLIGLIMEAALRTTLMSQELRLGLTIGFLGGFTTFSTFSYETFKLLEDGEFFSASLNVLASVALCLVGTWAGIMAARQL.

4 helical membrane passes run 4 to 24 (ILAI…LAGG), 32 to 52 (AFPW…GLIM), 68 to 88 (GLTI…YETF), and 101 to 121 (LNVL…IMAA). Gly75 and Thr78 together coordinate Na(+).

Belongs to the fluoride channel Fluc/FEX (TC 1.A.43) family.

The protein resides in the cell inner membrane. It carries out the reaction fluoride(in) = fluoride(out). Na(+) is not transported, but it plays an essential structural role and its presence is essential for fluoride channel function. Its function is as follows. Fluoride-specific ion channel. Important for reducing fluoride concentration in the cell, thus reducing its toxicity. The polypeptide is Fluoride-specific ion channel FluC (Geobacter sulfurreducens (strain ATCC 51573 / DSM 12127 / PCA)).